The primary structure comprises 138 residues: Large ribosomal subunit protein uL16 (138 aa).

Positions 1–13 (MLQPSRRKFRKEQ) are enriched in basic residues. Positions 1-20 (MLQPSRRKFRKEQKGRNTGV) are disordered.

This sequence belongs to the universal ribosomal protein uL16 family. Part of the 50S ribosomal subunit.

Functionally, binds 23S rRNA and is also seen to make contacts with the A and possibly P site tRNAs. This is Large ribosomal subunit protein uL16 from Leptothrix cholodnii (strain ATCC 51168 / LMG 8142 / SP-6) (Leptothrix discophora (strain SP-6)).